The primary structure comprises 145 residues: 3-dehydroquinate dehydratase (145 aa).

Residue tyrosine 22 is the Proton acceptor of the active site. 3 residues coordinate substrate: asparagine 71, histidine 77, and aspartate 84. Histidine 97 acts as the Proton donor in catalysis. Residues 98–99 and arginine 108 contribute to the substrate site; that span reads IS.

Belongs to the type-II 3-dehydroquinase family. In terms of assembly, homododecamer.

It carries out the reaction 3-dehydroquinate = 3-dehydroshikimate + H2O. It functions in the pathway metabolic intermediate biosynthesis; chorismate biosynthesis; chorismate from D-erythrose 4-phosphate and phosphoenolpyruvate: step 3/7. Catalyzes a trans-dehydration via an enolate intermediate. This is 3-dehydroquinate dehydratase from Exiguobacterium sp. (strain ATCC BAA-1283 / AT1b).